The chain runs to 961 residues: Transcription factor MYB3R-4 (961 aa).

A disordered region spans residues 1–33 (MEAESSTPQERIPKLRHGRTSGPARRSTRGQWT). HTH myb-type domains follow at residues 24-75 (ARRS…QKVL), 76-131 (NPEL…NPAI), and 132-182 (NKEA…KKKL). DNA-binding regions (H-T-H motif) lie at residues 52 to 75 (WKKI…QKVL), 104 to 127 (WSTI…HNHL), and 155 to 178 (WAEL…HSSV). Disordered stretches follow at residues 390 to 457 (GHSV…LIIS) and 534 to 555 (RPHS…EDMG). 2 stretches are compositionally biased toward polar residues: residues 391–405 (HSVS…NEFN) and 416–430 (SSAS…TKSP). Residues 431–444 (TQSSSSRFTATAAS) are compositionally biased toward low complexity. Basic and acidic residues predominate over residues 534–554 (RPHSLPKHEPNMTNEQHHEDM). The short motif at 612–619 (GKKTLVGA) is the Nuclear localization signal element. The tract at residues 756 to 781 (NTGKPVLSTPGQSVTKAEKAQVSTPR) is disordered. The segment covering 764 to 781 (TPGQSVTKAEKAQVSTPR) has biased composition (polar residues).

Component of a DREAM-like complex which modulates a variety of developmentally regulated genes and of the mitotic genes in proliferating and differentiated cells. Associates with CDKA-1, RBR1 and E2FB, but not with E2FC, in proliferating cells, at early stages of leaves development. In terms of tissue distribution, expressed in roots, cotyledons and leaves, especially in vascular tissues, and in flowers.

It localises to the nucleus. Its function is as follows. Transcription factor that binds 5'-AACGG-3' motifs in gene promoters. Involved in the regulation of cytokinesis, probably via the activation of several G2/M phase-specific genes transcription (e.g. KNOLLE). Required for the maintenance of diploidy. Functionally, involved in transcription regulation during induced endoreduplication at the powdery mildew (e.g. G.orontii) infection site, thus promoting G.orontii growth and reproduction. The protein is Transcription factor MYB3R-4 of Arabidopsis thaliana (Mouse-ear cress).